Consider the following 280-residue polypeptide: Putative pyruvate, phosphate dikinase regulatory protein (280 aa).

147–154 (GASRSSKT) contacts ADP.

The protein belongs to the pyruvate, phosphate/water dikinase regulatory protein family. PDRP subfamily.

It catalyses the reaction N(tele)-phospho-L-histidyl/L-threonyl-[pyruvate, phosphate dikinase] + ADP = N(tele)-phospho-L-histidyl/O-phospho-L-threonyl-[pyruvate, phosphate dikinase] + AMP + H(+). It carries out the reaction N(tele)-phospho-L-histidyl/O-phospho-L-threonyl-[pyruvate, phosphate dikinase] + phosphate + H(+) = N(tele)-phospho-L-histidyl/L-threonyl-[pyruvate, phosphate dikinase] + diphosphate. Functionally, bifunctional serine/threonine kinase and phosphorylase involved in the regulation of the pyruvate, phosphate dikinase (PPDK) by catalyzing its phosphorylation/dephosphorylation. The polypeptide is Putative pyruvate, phosphate dikinase regulatory protein (Pelobacter propionicus (strain DSM 2379 / NBRC 103807 / OttBd1)).